A 70-amino-acid chain; its full sequence is Large ribosomal subunit protein bL31c (70 aa).

The protein belongs to the bacterial ribosomal protein bL31 family. Type A subfamily. As to quaternary structure, part of the 50S ribosomal subunit.

It is found in the plastid. It localises to the chloroplast. Functionally, binds the 23S rRNA. This chain is Large ribosomal subunit protein bL31c, found in Pyropia yezoensis (Susabi-nori).